Consider the following 559-residue polypeptide: DNA ligase (559 aa).

Glutamate 247 provides a ligand contact to ATP. Residue lysine 249 is the N6-AMP-lysine intermediate of the active site. ATP-binding residues include arginine 254, arginine 269, glutamate 299, phenylalanine 339, arginine 414, and lysine 420.

This sequence belongs to the ATP-dependent DNA ligase family. The cofactor is Mg(2+).

The enzyme catalyses ATP + (deoxyribonucleotide)n-3'-hydroxyl + 5'-phospho-(deoxyribonucleotide)m = (deoxyribonucleotide)n+m + AMP + diphosphate.. In terms of biological role, DNA ligase that seals nicks in double-stranded DNA during DNA replication, DNA recombination and DNA repair. The polypeptide is DNA ligase (Pyrococcus abyssi (strain GE5 / Orsay)).